Consider the following 232-residue polypeptide: Charged multivesicular body protein 4c (232 aa).

Disordered stretches follow at residues 1-23 and 172-232; these read MSKL…PSAQ and EQEE…AWAT. The segment at 1–153 is intramolecular interaction with C-terminus; that stretch reads MSKLGKFFKG…EISEAFSQRV (153 aa). Over residues 11–23 the composition is skewed to low complexity; sequence SRSSRARAAPSAQ. Coiled-coil stretches lie at residues 21-50 and 125-182; these read SAQE…IQRE and LNKI…KMTS. Residues 154 to 232 form an intramolecular interaction with N-terminus region; that stretch reads QFADGFDEDE…DFKQLAAWAT (79 aa). Ser210 is modified (phosphoserine; by AURKB).

Belongs to the SNF7 family. In terms of assembly, probable core component of the endosomal sorting required for transport complex III (ESCRT-III). ESCRT-III components are thought to multimerize to form a flat lattice on the perimeter membrane of the endosome. Several assembly forms of ESCRT-III may exist that interact and act sequentially. Self-associates. Interacts with CHMP2A. Interacts with CHMP4A. Interacts with CHMP4B. Interacts with CHMP6. Interacts with VPS4A. Interacts with PDCD6IP; the interaction is direct. Post-translationally, phosphorylated at Ser-210 by AURKB during cytokinesis: together with ZFYVE19/ANCHR, phosphorylated CHMP4C retains abscission-competent VPS4 (VPS4A and/or VPS4B) at the midbody ring until abscission checkpoint signaling is terminated at late cytokinesis.

The protein localises to the cytoplasm. The protein resides in the cytosol. It is found in the late endosome membrane. Its subcellular location is the midbody. It localises to the midbody ring. Functionally, probable core component of the endosomal sorting required for transport complex III (ESCRT-III) which is involved in multivesicular bodies (MVBs) formation and sorting of endosomal cargo proteins into MVBs. MVBs contain intraluminal vesicles (ILVs) that are generated by invagination and scission from the limiting membrane of the endosome and mostly are delivered to lysosomes enabling degradation of membrane proteins, such as stimulated growth factor receptors, lysosomal enzymes and lipids. The MVB pathway appears to require the sequential function of ESCRT-O, -I,-II and -III complexes. ESCRT-III proteins mostly dissociate from the invaginating membrane before the ILV is released. The ESCRT machinery also functions in topologically equivalent membrane fission events, such as the terminal stages of cytokinesis. Key component of the cytokinesis checkpoint, a process required to delay abscission to prevent both premature resolution of intercellular chromosome bridges and accumulation of DNA damage: upon phosphorylation by AURKB, together with ZFYVE19/ANCHR, retains abscission-competent VPS4 (VPS4A and/or VPS4B) at the midbody ring until abscission checkpoint signaling is terminated at late cytokinesis. Deactivation of AURKB results in dephosphorylation of CHMP4C followed by its dissociation from ANCHR and VPS4 and subsequent abscission. ESCRT-III proteins are believed to mediate the necessary vesicle extrusion and/or membrane fission activities, possibly in conjunction with the AAA ATPase VPS4. CHMP4A/B/C are required for the exosomal release of SDCBP, CD63 and syndecan. The polypeptide is Charged multivesicular body protein 4c (Chmp4c) (Rattus norvegicus (Rat)).